Consider the following 631-residue polypeptide: Glutamyl-tRNA(Gln) amidotransferase subunit E (631 aa).

Belongs to the GatB/GatE family. GatE subfamily. In terms of assembly, heterodimer of GatD and GatE.

The enzyme catalyses L-glutamyl-tRNA(Gln) + L-glutamine + ATP + H2O = L-glutaminyl-tRNA(Gln) + L-glutamate + ADP + phosphate + H(+). Its function is as follows. Allows the formation of correctly charged Gln-tRNA(Gln) through the transamidation of misacylated Glu-tRNA(Gln) in organisms which lack glutaminyl-tRNA synthetase. The reaction takes place in the presence of glutamine and ATP through an activated gamma-phospho-Glu-tRNA(Gln). The GatDE system is specific for glutamate and does not act on aspartate. The polypeptide is Glutamyl-tRNA(Gln) amidotransferase subunit E (Methanococcus maripaludis (strain C7 / ATCC BAA-1331)).